Reading from the N-terminus, the 263-residue chain is ATP synthase subunit a (263 aa).

A run of 5 helical transmembrane segments spans residues L31 to I51, I89 to I109, D133 to F153, L205 to W225, and A235 to V255.

It belongs to the ATPase A chain family. F-type ATPases have 2 components, CF(1) - the catalytic core - and CF(0) - the membrane proton channel. CF(1) has five subunits: alpha(3), beta(3), gamma(1), delta(1), epsilon(1). CF(0) has three main subunits: a(1), b(2) and c(9-12). The alpha and beta chains form an alternating ring which encloses part of the gamma chain. CF(1) is attached to CF(0) by a central stalk formed by the gamma and epsilon chains, while a peripheral stalk is formed by the delta and b chains.

The protein resides in the cell inner membrane. In terms of biological role, key component of the proton channel; it plays a direct role in the translocation of protons across the membrane. The chain is ATP synthase subunit a from Dichelobacter nodosus (strain VCS1703A).